Here is a 327-residue protein sequence, read N- to C-terminus: Ribose-phosphate pyrophosphokinase (327 aa).

ATP is bound by residues 46 to 48 and 105 to 106; these read NGE and RQ. His139 and Asp179 together coordinate Mg(2+). Residue Lys203 is part of the active site. D-ribose 5-phosphate-binding positions include Arg205, Asp231, and 235-239; that span reads DTGGT.

It belongs to the ribose-phosphate pyrophosphokinase family. Class I subfamily. In terms of assembly, homohexamer. The cofactor is Mg(2+).

It is found in the cytoplasm. It catalyses the reaction D-ribose 5-phosphate + ATP = 5-phospho-alpha-D-ribose 1-diphosphate + AMP + H(+). Its pathway is metabolic intermediate biosynthesis; 5-phospho-alpha-D-ribose 1-diphosphate biosynthesis; 5-phospho-alpha-D-ribose 1-diphosphate from D-ribose 5-phosphate (route I): step 1/1. In terms of biological role, involved in the biosynthesis of the central metabolite phospho-alpha-D-ribosyl-1-pyrophosphate (PRPP) via the transfer of pyrophosphoryl group from ATP to 1-hydroxyl of ribose-5-phosphate (Rib-5-P). In Mycobacterium leprae (strain TN), this protein is Ribose-phosphate pyrophosphokinase.